Reading from the N-terminus, the 491-residue chain is Cysteine--tRNA ligase (491 aa).

Zn(2+) is bound at residue Cys31. The short motif at Pro33 to His43 is the 'HIGH' region element. Zn(2+) is bound by residues Cys226, His251, and Glu255. The 'KMSKS' region signature appears at Lys283–Ser287. Lys286 is an ATP binding site.

Belongs to the class-I aminoacyl-tRNA synthetase family. Monomer. Requires Zn(2+) as cofactor.

It localises to the cytoplasm. It catalyses the reaction tRNA(Cys) + L-cysteine + ATP = L-cysteinyl-tRNA(Cys) + AMP + diphosphate. The sequence is that of Cysteine--tRNA ligase from Bacteroides fragilis (strain ATCC 25285 / DSM 2151 / CCUG 4856 / JCM 11019 / LMG 10263 / NCTC 9343 / Onslow / VPI 2553 / EN-2).